We begin with the raw amino-acid sequence, 239 residues long: uncharacterized protein (239 aa).

3 consecutive transmembrane segments (helical) span residues 125 to 144, 149 to 171, and 197 to 216; these read LAIISFICSPSLSFFLLILY, IFVLFKLFAVEYVRYELVYFLFL, and SVLNLSVSVTILAVLQGILF.

The protein resides in the cell membrane. This is an uncharacterized protein from Aquifex aeolicus (strain VF5).